Reading from the N-terminus, the 746-residue chain is NAD(P)H-quinone oxidoreductase subunit 5, chloroplastic (746 aa).

16 consecutive transmembrane segments (helical) span residues 9–29 (WIIP…LLLF), 40–60 (WTFL…YLSI), 89–109 (IDPL…LVLI), 125–145 (FAYM…SNLI), 147–167 (VYFF…FWFT), 185–205 (GDFG…SFEF), 221–241 (VNLL…IAKS), 258–278 (TPIS…FLVA), 280–300 (LLPL…IGII), 327–347 (LGYM…FHLI), 354–374 (ALLF…VGYS), 396–416 (IAFL…CFWS), 425–445 (LLFS…TAFY), 547–567 (ILFP…IGIP), 608–628 (FSVS…KPFY), and 723–743 (YLFL…FFYF).

Belongs to the complex I subunit 5 family. In terms of assembly, NDH is composed of at least 16 different subunits, 5 of which are encoded in the nucleus.

The protein resides in the plastid. The protein localises to the chloroplast thylakoid membrane. The enzyme catalyses a plastoquinone + NADH + (n+1) H(+)(in) = a plastoquinol + NAD(+) + n H(+)(out). The catalysed reaction is a plastoquinone + NADPH + (n+1) H(+)(in) = a plastoquinol + NADP(+) + n H(+)(out). Functionally, NDH shuttles electrons from NAD(P)H:plastoquinone, via FMN and iron-sulfur (Fe-S) centers, to quinones in the photosynthetic chain and possibly in a chloroplast respiratory chain. The immediate electron acceptor for the enzyme in this species is believed to be plastoquinone. Couples the redox reaction to proton translocation, and thus conserves the redox energy in a proton gradient. The protein is NAD(P)H-quinone oxidoreductase subunit 5, chloroplastic (ndhF) of Nasturtium officinale (Watercress).